The primary structure comprises 32 residues: Cytochrome b6-f complex subunit 7 (32 aa).

The chain crosses the membrane as a helical span at residues 5-25 (IFGTAAIFWVLIPIGLVGGAL).

The protein belongs to the PetM family. The 4 large subunits of the cytochrome b6-f complex are cytochrome b6, subunit IV (17 kDa polypeptide, PetD), cytochrome f and the Rieske protein, while the 4 small subunits are PetG, PetL, PetM and PetN. The complex functions as a dimer.

It localises to the cellular thylakoid membrane. In terms of biological role, component of the cytochrome b6-f complex, which mediates electron transfer between photosystem II (PSII) and photosystem I (PSI), cyclic electron flow around PSI, and state transitions. This chain is Cytochrome b6-f complex subunit 7, found in Synechococcus sp. (strain CC9902).